The sequence spans 860 residues: Leucine--tRNA ligase (860 aa).

Positions P42–H52 match the 'HIGH' region motif. Residues K619–S623 carry the 'KMSKS' region motif. K622 serves as a coordination point for ATP.

The protein belongs to the class-I aminoacyl-tRNA synthetase family.

It is found in the cytoplasm. The catalysed reaction is tRNA(Leu) + L-leucine + ATP = L-leucyl-tRNA(Leu) + AMP + diphosphate. This chain is Leucine--tRNA ligase, found in Escherichia coli (strain 55989 / EAEC).